The chain runs to 279 residues: Undecaprenyl-diphosphatase (279 aa).

The next 8 membrane-spanning stretches (helical) occupy residues 2–22 (LFIE…TEWL), 44–64 (AFME…VIVI), 85–105 (WQLW…AVPL), 113–133 (FNHM…FLWI), 163–183 (VLSI…AIIL), 188–208 (TVAA…YSGL), 225–245 (LLVL…VIKL), and 255–275 (FTVF…YSVF).

Belongs to the UppP family.

The protein resides in the cell membrane. It catalyses the reaction di-trans,octa-cis-undecaprenyl diphosphate + H2O = di-trans,octa-cis-undecaprenyl phosphate + phosphate + H(+). In terms of biological role, catalyzes the dephosphorylation of undecaprenyl diphosphate (UPP). Confers resistance to bacitracin. This is Undecaprenyl-diphosphatase from Streptococcus equi subsp. zooepidemicus (strain H70).